Reading from the N-terminus, the 661-residue chain is COBRA-like protein 7 (661 aa).

Positions 1–26 are cleaved as a signal peptide; it reads MDSAPNFIPRLLLLSLLIVSIPLTSS. The interval 26–45 is disordered; sequence SQSDANTTNPSPSPPSDSDL. N-linked (GlcNAc...) asparagine glycosylation is found at asparagine 31, asparagine 64, asparagine 122, asparagine 170, asparagine 314, asparagine 327, asparagine 356, asparagine 369, asparagine 398, asparagine 410, asparagine 430, asparagine 472, asparagine 551, and asparagine 561. The GPI-anchor amidated serine moiety is linked to residue serine 637. The propeptide at 638-661 is removed in mature form; it reads SQHRKHISVFLLALPVLALLILRA.

Belongs to the COBRA family. In terms of tissue distribution, expressed in roots, stems, leaves, flowers and siliques.

The protein resides in the cell membrane. The sequence is that of COBRA-like protein 7 (COBL7) from Arabidopsis thaliana (Mouse-ear cress).